Here is an 852-residue protein sequence, read N- to C-terminus: Gamma-tubulin complex component 2 homolog (852 aa).

The residue at position 73 (serine 73) is a Phosphoserine.

It belongs to the TUBGCP family. Gamma-tubulin small complex (Gamma TuSC) is a heterotetrameric complex which contains two molecules of gamma-tubulin, and one molecule each of Dgrip84 and Dgrip91. The gamma-tubulin in this complex binds preferentially to GDP over GTP.

Its subcellular location is the cytoplasm. The protein localises to the cytoskeleton. The protein resides in the microtubule organizing center. It is found in the centrosome. It localises to the perinuclear region. The polypeptide is Gamma-tubulin complex component 2 homolog (Grip84) (Drosophila melanogaster (Fruit fly)).